Here is a 365-residue protein sequence, read N- to C-terminus: 1-aminocyclopropane-1-carboxylate oxidase homolog 1 (365 aa).

Residues 212–313 enclose the Fe2OG dioxygenase domain; that stretch reads CTNSLLLLGH…RISVACFFSS (102 aa). Positions 238, 240, and 294 each coordinate Fe cation.

Belongs to the iron/ascorbate-dependent oxidoreductase family. Fe cation is required as a cofactor.

This chain is 1-aminocyclopropane-1-carboxylate oxidase homolog 1, found in Arabidopsis thaliana (Mouse-ear cress).